The primary structure comprises 309 residues: Olfactory receptor 10J5 (309 aa).

Residues 1–27 are Extracellular-facing; sequence MQRNNFTEVIEFVFLGFSSFGKHQITL. The helical transmembrane segment at 28–48 threads the bilayer; the sequence is FVVFLTIYILTLAGNIIIVTI. The Cytoplasmic portion of the chain corresponds to 49–57; sequence THIDHHLHT. A helical transmembrane segment spans residues 58–78; the sequence is PMYFFLSMLASSETVYTLVIV. At 79 to 84 the chain is on the extracellular side; that stretch reads PRMLSS. Residues 85–105 form a helical membrane-spanning segment; it reads LIFYNLPISLAGCATQMFFFV. Cys-97 and Cys-178 form a disulfide bridge. Topologically, residues 106-131 are cytoplasmic; sequence TLATNNCFLLTAMGYDRYVAICNPLR. Residues 132–152 form a helical membrane-spanning segment; it reads YTIIMSKGMCALLVCGSLGTG. Residues 153–203 lie on the Extracellular side of the membrane; that stretch reads LVMAVLHVPAMFHLPFCGTVVEHFFCDIYPVMKLSCVDTTVNEIINYGVSS. Residues 204-224 traverse the membrane as a helical segment; that stretch reads FVILVPIGLIFISYVLIVSSI. Residues 225–235 are Cytoplasmic-facing; sequence LKIVSTEGQKK. The chain crosses the membrane as a helical span at residues 236 to 256; the sequence is AFATCASHLTVVIVHYGCASI. The Extracellular portion of the chain corresponds to 257–270; the sequence is AYLKPKSESSVEKD. Residues 271–291 traverse the membrane as a helical segment; sequence LLLSVTYTIITPLLNPVVYSL. Residues 292 to 309 lie on the Cytoplasmic side of the membrane; sequence RNKEVKDALCRAVGRNTS.

This sequence belongs to the G-protein coupled receptor 1 family. In terms of tissue distribution, expressed in the olfactory epithelium as well as in the testis. Expressed in round spermatids during stages VI-VIII of spermatogenesis.

The protein localises to the cell membrane. In terms of biological role, olfactory receptor. Activated by the synthetic floral odorant, lyral, and by alpha-cedrene, a sesquiterpene constituent of cedarwood oil. Its activation increases intracellular Ca(2+). Acts as a key regulator of myogenesis through its actions on cell migration and adhesion by activating the Ca(2+)-dependent AKT signal transduction pathway. Also acts as a regulator of angiogenesis. Moreover, plays a role in the regulation of lipid accumulation in hepatocytes via the cAMP-PKA pathway. Involved in sperm chemotaxis and motility. The protein is Olfactory receptor 10J5 of Mus musculus (Mouse).